The sequence spans 342 residues: Dual-specificity RNA methyltransferase RlmN (342 aa).

Glutamate 92 functions as the Proton acceptor in the catalytic mechanism. One can recognise a Radical SAM core domain in the interval 98 to 329 (DLPRSTLCVS…THVRRSRGGE (232 aa)). Cysteine 105 and cysteine 334 are disulfide-bonded. [4Fe-4S] cluster is bound by residues cysteine 112, cysteine 116, and cysteine 119. Residues 161 to 162 (GE), serine 193, 215 to 217 (SLH), and asparagine 291 each bind S-adenosyl-L-methionine. Residue cysteine 334 is the S-methylcysteine intermediate of the active site.

It belongs to the radical SAM superfamily. RlmN family. It depends on [4Fe-4S] cluster as a cofactor.

The protein resides in the cytoplasm. It catalyses the reaction adenosine(2503) in 23S rRNA + 2 reduced [2Fe-2S]-[ferredoxin] + 2 S-adenosyl-L-methionine = 2-methyladenosine(2503) in 23S rRNA + 5'-deoxyadenosine + L-methionine + 2 oxidized [2Fe-2S]-[ferredoxin] + S-adenosyl-L-homocysteine. The catalysed reaction is adenosine(37) in tRNA + 2 reduced [2Fe-2S]-[ferredoxin] + 2 S-adenosyl-L-methionine = 2-methyladenosine(37) in tRNA + 5'-deoxyadenosine + L-methionine + 2 oxidized [2Fe-2S]-[ferredoxin] + S-adenosyl-L-homocysteine. Functionally, specifically methylates position 2 of adenine 2503 in 23S rRNA and position 2 of adenine 37 in tRNAs. m2A2503 modification seems to play a crucial role in the proofreading step occurring at the peptidyl transferase center and thus would serve to optimize ribosomal fidelity. This chain is Dual-specificity RNA methyltransferase RlmN, found in Syntrophobacter fumaroxidans (strain DSM 10017 / MPOB).